The chain runs to 189 residues: Protein GrpE (189 aa).

The segment covering 1–14 has biased composition (basic and acidic residues); the sequence is MTEKNEEVVEDKNI. The segment at 1 to 38 is disordered; that stretch reads MTEKNEEVVEDKNISDQTDENLTEEIESEADDLQVEPD. Over residues 17–35 the composition is skewed to acidic residues; sequence QTDENLTEEIESEADDLQV.

Belongs to the GrpE family. As to quaternary structure, homodimer.

The protein resides in the cytoplasm. Functionally, participates actively in the response to hyperosmotic and heat shock by preventing the aggregation of stress-denatured proteins, in association with DnaK and GrpE. It is the nucleotide exchange factor for DnaK and may function as a thermosensor. Unfolded proteins bind initially to DnaJ; upon interaction with the DnaJ-bound protein, DnaK hydrolyzes its bound ATP, resulting in the formation of a stable complex. GrpE releases ADP from DnaK; ATP binding to DnaK triggers the release of the substrate protein, thus completing the reaction cycle. Several rounds of ATP-dependent interactions between DnaJ, DnaK and GrpE are required for fully efficient folding. This chain is Protein GrpE, found in Leuconostoc mesenteroides subsp. mesenteroides (strain ATCC 8293 / DSM 20343 / BCRC 11652 / CCM 1803 / JCM 6124 / NCDO 523 / NBRC 100496 / NCIMB 8023 / NCTC 12954 / NRRL B-1118 / 37Y).